Reading from the N-terminus, the 344-residue chain is Fructose-1,6-bisphosphatase class 1 (344 aa).

Positions 92, 115, 117, and 118 each coordinate Mg(2+). Residues 118–121 (DGSS), Asn-211, Tyr-244, and Lys-274 contribute to the substrate site. Glu-280 contributes to the Mg(2+) binding site.

It belongs to the FBPase class 1 family. As to quaternary structure, homotetramer. Mg(2+) serves as cofactor.

It localises to the cytoplasm. It carries out the reaction beta-D-fructose 1,6-bisphosphate + H2O = beta-D-fructose 6-phosphate + phosphate. It participates in carbohydrate biosynthesis; gluconeogenesis. In Aeromonas hydrophila subsp. hydrophila (strain ATCC 7966 / DSM 30187 / BCRC 13018 / CCUG 14551 / JCM 1027 / KCTC 2358 / NCIMB 9240 / NCTC 8049), this protein is Fructose-1,6-bisphosphatase class 1.